Here is a 174-residue protein sequence, read N- to C-terminus: Eukaryotic translation elongation factor 1 epsilon-1 (174 aa).

An N-acetylalanine modification is found at alanine 2. The tract at residues 2–56 (AAAAELSLLEKSLGLSKGNKYSAQGERQIPVLQTNNGPSLTGLTTIAAHLVKQAN) is N-terminal. The GST C-terminal domain occupies 50–173 (HLVKQANKEY…FIKNRLYTNS (124 aa)). The linker stretch occupies residues 57–63 (KEYLLGS). A C-terminal region spans residues 64 to 152 (TAEEKAIVQQ…SRWFCHIQHY (89 aa)). N6-acetyllysine is present on lysine 138. The stretch at 153–169 (PGIRQHLSSVVFIKNRL) forms a coiled coil.

In terms of assembly, part of a multisubunit complex that groups tRNA ligases for Arg (RARS1), Asp (DARS1), Gln (QARS1), Ile (IARS1), Leu (LARS1), Lys (KARS1), Met (MARS1) the bifunctional ligase for Glu and Pro (EPRS1) and the auxiliary subunits AIMP1/p43, AIMP2/p38 and EEF1E1/p18. Can interact simultaneously with MARS1 and EPRS1. Forms a linear complex that contains MARS1, EEF1E1, EPRS1 and AIMP2 that is at the core of the multisubunit complex. Interacts with ATM and ATR. The interaction with ATM, which takes place independently of TP53, is induced by DNA damage that may occur during genotoxic stress or cell growth. The interaction with ATR is enhanced by UV irradiation. Down-regulated in various cancer tissues.

The protein resides in the cytoplasm. The protein localises to the cytosol. Its subcellular location is the nucleus. Positive modulator of ATM response to DNA damage. In Homo sapiens (Human), this protein is Eukaryotic translation elongation factor 1 epsilon-1 (EEF1E1).